A 122-amino-acid chain; its full sequence is UPF0102 protein BQ09720 (122 aa).

This sequence belongs to the UPF0102 family.

This is UPF0102 protein BQ09720 from Bartonella quintana (strain Toulouse) (Rochalimaea quintana).